Reading from the N-terminus, the 825-residue chain is MGKKRTKGRSAPDTVASESAEPVCRHLRKGLEQGNLKKALVNVEWNICQDCKTDNKVKDKPEEEAEDPSVWLCLKCGHQGCGRDSQEQHALKHYTTPRSEPHYLVLSLDNWSVWCYKCDEEVKYCSSNRLGQVVDYVRKQAGVRTSKPAEKNNGHIELENKKLEKESKNEQEREKSENLAKETIPMDSASQITVKGLSNLGNTCFFNAVMQNLSQTPVLRELLKEVKMSGTIVKIEPPDLALTEPLEVNLEPPGPLTLAMSQFLSEMQENKKRVVTPKELFSQVCKKATRFKGYQQQDSQELLRYLLDGMRAEEHQRVSKGILKAFGNSTEKLDEEVKNKVKDYEKKKAIPSFVDRIFGGELTSTIMCDECRTVSLVHESFLDLSLPVLDDQSGKKSINDKNVKMTMEEEDKDSEEEKDDSYMKSRSDLPSGTSKHLQKKAKKQAKKQAKNQRRQQKIQERFLHFNELCATDYTEDNEREADTALAGEVEVDTDSTHGSQEEATQIELSVNQKDLDGQESMIERTPDVQESPEDLGVKSANTESDLGIVTPAPECPRDFNGAFLEERTSGELDIINGLKNLNLNAAVDPDEINIEIPNDSHSAPKVYEVMNEDPETAFCTLANREAFSTDECSIQHCLYQFTRNEKLQDANKLLCEVCSRRQCNGPKANIKGDRRHVYTNAKKQMLVSLAPPVLTLHLKRFQQAGFNLRKVNKHIKFPEILDLAPFCTLKCKNVAEESTRVLYSLYGVVEHSGTMRSGHYTAYAKERTASCHLSNLVLHGDIPQDCEMESTKGQWFHISDTHVQAVPITKVLNSQAYLLFYERIL.

The disordered stretch occupies residues 1-20 (MGKKRTKGRSAPDTVASESA). The segment at 22–141 (PVCRHLRKGL…QVVDYVRKQA (120 aa)) adopts a UBP-type zinc-finger fold. The Zn(2+) site is built by Cys24, His26, Cys48, Cys51, Cys73, Cys76, Cys81, His89, His93, His102, Cys115, and Cys118. Lys139 is covalently cross-linked (Glycyl lysine isopeptide (Lys-Gly) (interchain with G-Cter in SUMO2)). Positions 164 to 180 (EKESKNEQEREKSENLA) are enriched in basic and acidic residues. The interval 164-184 (EKESKNEQEREKSENLAKETI) is disordered. Ser188 is subject to Phosphoserine. Residues 195–824 (KGLSNLGNTC…QAYLLFYERI (630 aa)) enclose the USP domain. The active-site Nucleophile is the Cys204. Residues 393 to 407 (SGKKSINDKNVKMTM) are compositionally biased toward basic and acidic residues. Residues 393-456 (SGKKSINDKN…KQAKNQRRQQ (64 aa)) are disordered. Over residues 408 to 419 (EEEDKDSEEEKD) the composition is skewed to acidic residues. A Phosphoserine modification is found at Ser414. Over residues 436–456 (HLQKKAKKQAKKQAKNQRRQQ) the composition is skewed to basic residues. Phosphoserine occurs at positions 520 and 531. Catalysis depends on His759, which acts as the Proton acceptor.

This sequence belongs to the peptidase C19 family. USP16 subfamily. In terms of assembly, homotetramer. Associates with late pre-40S ribosomes. Interacts with CEP78; promoting deubiquitination of tektins. Phosphorylated at the onset of mitosis and dephosphorylated during the metaphase/anaphase transition. Phosphorylation by AURKB enhances the deubiquitinase activity.

The protein resides in the nucleus. It localises to the cytoplasm. The catalysed reaction is Thiol-dependent hydrolysis of ester, thioester, amide, peptide and isopeptide bonds formed by the C-terminal Gly of ubiquitin (a 76-residue protein attached to proteins as an intracellular targeting signal).. In terms of biological role, specifically deubiquitinates 'Lys-120' of histone H2A (H2AK119Ub), a specific tag for epigenetic transcriptional repression, thereby acting as a coactivator. Deubiquitination of histone H2A is a prerequisite for subsequent phosphorylation at 'Ser-11' of histone H3 (H3S10ph), and is required for chromosome segregation when cells enter into mitosis. In resting B- and T-lymphocytes, phosphorylation by AURKB leads to enhance its activity, thereby maintaining transcription in resting lymphocytes. Regulates Hox gene expression via histone H2A deubiquitination. Prefers nucleosomal substrates. Does not deubiquitinate histone H2B. Also deubiquitinates non-histone proteins, such as ribosomal protein RPS27A: deubiquitination of monoubiquitinated RPS27A promotes maturation of the 40S ribosomal subunit. Also mediates deubiquitination of tektin proteins (TEKT1, TEKT2, TEK3, TEKT4 and TEKT5), promoting their stability. In Mus musculus (Mouse), this protein is Ubiquitin carboxyl-terminal hydrolase 16 (Usp16).